Reading from the N-terminus, the 414-residue chain is Putative cytochrome P450 126 (414 aa).

Cysteine 363 contributes to the heme binding site.

The protein belongs to the cytochrome P450 family. Heme serves as cofactor.

In Mycobacterium tuberculosis (strain CDC 1551 / Oshkosh), this protein is Putative cytochrome P450 126 (cyp126).